A 283-amino-acid polypeptide reads, in one-letter code: MEPLPEPTSRPRLRPRPRCLLLLPLLLLLLLLLPAPELGPREARAEETDWVRLPSKCEVCKYVAVELKSAFEETGKTKEVIDTGYGILDRKASGVKYTKSDLRLIEVTETICKRLLDYSLHKERTGSNRFAKGMSETFETLHNLVHKGVKVVMDIPYELWNETSAEVADLKKQCDVLVEEFEEVIEDWYRNHQEEDLTQFLCANHVLKGKDTSCLAEQWSGKKGDTAALGGKKSKKKSSRAKASGGGSKQRKELGGIEGDPSPEEDEGIQKASPLTHSPPDEL.

Residues 1 to 35 (MEPLPEPTSRPRLRPRPRCLLLLPLLLLLLLLLPA) form the signal peptide. The Saposin B-type domain occupies 55–276 (SKCEVCKYVA…EGIQKASPLT (222 aa)). An N-linked (GlcNAc...) asparagine glycan is attached at Asn-161. The stretch at 161–187 (NETSAEVADLKKQCDVLVEEFEEVIED) forms a coiled coil. The interval 223-283 (KGDTAALGGK…PLTHSPPDEL (61 aa)) is disordered.

It belongs to the canopy family. Interacts with HSP90B1; this interaction is disrupted in the presence of ATP. Interacts with TLR1, TLR2, TLR4 and TLR9.

The protein localises to the endoplasmic reticulum. Functionally, toll-like receptor (TLR)-specific co-chaperone for HSP90B1. Required for proper TLR folding, except that of TLR3, and hence controls TLR exit from the endoplasmic reticulum. Consequently, required for both innate and adaptive immune responses. The protein is Protein canopy homolog 3 (CNPY3) of Sus scrofa (Pig).